A 179-amino-acid polypeptide reads, in one-letter code: Ribosome maturation factor RimP (179 aa).

Belongs to the RimP family.

It is found in the cytoplasm. In terms of biological role, required for maturation of 30S ribosomal subunits. This Chlorobium chlorochromatii (strain CaD3) protein is Ribosome maturation factor RimP.